Reading from the N-terminus, the 135-residue chain is Translation initiation factor 2 subunit beta (135 aa).

This sequence belongs to the eIF-2-beta/eIF-5 family. As to quaternary structure, heterotrimer composed of an alpha, a beta and a gamma chain.

Its function is as follows. eIF-2 functions in the early steps of protein synthesis by forming a ternary complex with GTP and initiator tRNA. This is Translation initiation factor 2 subunit beta from Methanobrevibacter smithii (strain ATCC 35061 / DSM 861 / OCM 144 / PS).